The sequence spans 124 residues: MSRGGAAVAKGKKKGVSFTIDCSKPVDDKIMEIASLEKFLQERIKVGGKAGALGDSVTITREKSKITVTADGQFSKRYLKYLTKKYLKKHNVRDWLRVIAANKDRNLYELRYFNIAENEGEEED.

This sequence belongs to the eukaryotic ribosomal protein eL22 family.

In Arabidopsis thaliana (Mouse-ear cress), this protein is Large ribosomal subunit protein eL22z (RPL22B).